Here is a 148-residue protein sequence, read N- to C-terminus: Receptor activity-modifying protein 1 (148 aa).

Residues 1–26 (MARGLRGLPRRGLWLLLVNHLFLATA) form the signal peptide. Cystine bridges form between C27-C82, C40-C72, and C57-C104. The Extracellular portion of the chain corresponds to 27-118 (CQDTDHAALL…RALQDPPSSV (92 aa)). A helical membrane pass occupies residues 119–140 (LCPFIVVPILATLLMTALVVWR). Topologically, residues 141 to 148 (SKRPEGIV) are cytoplasmic.

This sequence belongs to the RAMP family. As to quaternary structure, heterodimer of CALCRL and RAMP1; the interaction induces allosteric modulation of CALCRL function and CGRP1/CALCA and CGRP2/CALCB ligand specificity. Heterodimer of CALCR and RAMP1; interaction forms the AMYR1 receptor complex for amylin/IAPP and CGRP1/CALCA ligands.

The protein resides in the cell membrane. In terms of biological role, accessory protein that interacts with and modulates the function of G-protein coupled receptors including calcitonin gene-related peptide type 1 receptor (CALCRL) and calcitonin receptor (CALCR). Required for the transport of CALCRL to the plasma membrane. Together with CALCRL, form the receptor complex for the calcitonin gene-related peptides CGRP1/CALCA and CGRP2/CALCB. Together with CALCR, form the AMYR1 receptor complex for amylin/IAPP and CGRP1/CALCA. This is Receptor activity-modifying protein 1 (RAMP1) from Sus scrofa (Pig).